The primary structure comprises 220 residues: Tumor protein D54 (220 aa).

At M1 the chain carries N-acetylmethionine. A phosphoserine mark is found at S3, S12, and S19. Residues G40 to G82 are a coiled coil. Residues S96, S149, S168, and S175 each carry the phosphoserine modification. Phosphothreonine is present on T177. S180 is subject to Phosphoserine. T187 carries the phosphothreonine modification. The disordered stretch occupies residues K189 to F220. A phosphoserine mark is found at S206 and S209.

Belongs to the TPD52 family. Forms a homodimer or heterodimer with other members of the family. Interacts with MAL2.

In Mus musculus (Mouse), this protein is Tumor protein D54 (Tpd52l2).